We begin with the raw amino-acid sequence, 375 residues long: PqqA peptide cyclase (375 aa).

One can recognise a Radical SAM core domain in the interval 18 to 235 (ILPPMAMLAE…EAREKYQGIL (218 aa)). [4Fe-4S] cluster contacts are provided by Cys-32, Cys-36, and Cys-39.

The protein belongs to the radical SAM superfamily. PqqE family. As to quaternary structure, interacts with PqqD. The interaction is necessary for activity of PqqE. The cofactor is [4Fe-4S] cluster.

It carries out the reaction [PQQ precursor protein] + S-adenosyl-L-methionine = E-Y cross-linked-[PQQ precursor protein] + 5'-deoxyadenosine + L-methionine + H(+). It participates in cofactor biosynthesis; pyrroloquinoline quinone biosynthesis. In terms of biological role, catalyzes the cross-linking of a glutamate residue and a tyrosine residue in the PqqA protein as part of the biosynthesis of pyrroloquinoline quinone (PQQ). This chain is PqqA peptide cyclase, found in Rhizobium meliloti (strain 1021) (Ensifer meliloti).